The chain runs to 237 residues: Urease accessory protein UreF (237 aa).

It belongs to the UreF family. In terms of assembly, ureD, UreF and UreG form a complex that acts as a GTP-hydrolysis-dependent molecular chaperone, activating the urease apoprotein by helping to assemble the nickel containing metallocenter of UreC. The UreE protein probably delivers the nickel.

The protein localises to the cytoplasm. Required for maturation of urease via the functional incorporation of the urease nickel metallocenter. The sequence is that of Urease accessory protein UreF from Streptococcus salivarius (strain 57.I).